Consider the following 1267-residue polypeptide: DNA-directed RNA polymerase subunit beta'' (1267 aa).

Cys-222, Cys-290, Cys-297, and Cys-300 together coordinate Zn(2+).

This sequence belongs to the RNA polymerase beta' chain family. RpoC2 subfamily. In terms of assembly, in plastids the minimal PEP RNA polymerase catalytic core is composed of four subunits: alpha, beta, beta', and beta''. When a (nuclear-encoded) sigma factor is associated with the core the holoenzyme is formed, which can initiate transcription. Zn(2+) is required as a cofactor.

The protein localises to the plastid. It localises to the chloroplast. The catalysed reaction is RNA(n) + a ribonucleoside 5'-triphosphate = RNA(n+1) + diphosphate. Its function is as follows. DNA-dependent RNA polymerase catalyzes the transcription of DNA into RNA using the four ribonucleoside triphosphates as substrates. The sequence is that of DNA-directed RNA polymerase subunit beta'' from Emiliania huxleyi (Coccolithophore).